Consider the following 371-residue polypeptide: Anhydro-N-acetylmuramic acid kinase (371 aa).

9–16 contributes to the ATP binding site; it reads GTSLDAVD.

Belongs to the anhydro-N-acetylmuramic acid kinase family.

The enzyme catalyses 1,6-anhydro-N-acetyl-beta-muramate + ATP + H2O = N-acetyl-D-muramate 6-phosphate + ADP + H(+). It functions in the pathway amino-sugar metabolism; 1,6-anhydro-N-acetylmuramate degradation. The protein operates within cell wall biogenesis; peptidoglycan recycling. Functionally, catalyzes the specific phosphorylation of 1,6-anhydro-N-acetylmuramic acid (anhMurNAc) with the simultaneous cleavage of the 1,6-anhydro ring, generating MurNAc-6-P. Is required for the utilization of anhMurNAc either imported from the medium or derived from its own cell wall murein, and thus plays a role in cell wall recycling. This Caulobacter vibrioides (strain ATCC 19089 / CIP 103742 / CB 15) (Caulobacter crescentus) protein is Anhydro-N-acetylmuramic acid kinase.